Consider the following 366-residue polypeptide: Mitogen-activated protein kinase 13 (366 aa).

A Protein kinase domain is found at 25 to 308 (YVSLTHIGSG…ASQALAHPFF (284 aa)). 31-39 (IGSGAYGSV) contacts ATP. At serine 47 the chain carries Phosphoserine. ATP is bound at residue lysine 54. The Proton acceptor role is filled by aspartate 150. Threonine 180 carries the post-translational modification Phosphothreonine; by MAP2K3, MAP2K4, MAP2K6 and MAP2K7. The TXY signature appears at 180-182 (TGY). Tyrosine 182 bears the Phosphotyrosine; by MAP2K3, MAP2K4, MAP2K6 and MAP2K7 mark. Phosphoserine is present on serine 350.

Belongs to the protein kinase superfamily. CMGC Ser/Thr protein kinase family. MAP kinase subfamily. Interacts with MAPK8IP2. Mg(2+) is required as a cofactor. Post-translationally, dually phosphorylated on Thr-180 and Tyr-182 by MAP2K3/MKK3, MAP2K4/MKK4, MAP2K6/MKK6 and MAP2K7/MKK7, which activates the enzyme. Dephosphorylated by dual specificity phosphatase DUSP1.

It carries out the reaction L-seryl-[protein] + ATP = O-phospho-L-seryl-[protein] + ADP + H(+). It catalyses the reaction L-threonyl-[protein] + ATP = O-phospho-L-threonyl-[protein] + ADP + H(+). Its activity is regulated as follows. Activated by phosphorylation on threonine and tyrosine by dual specificity kinases, MAP2K3/MKK3 MAP2K6/MKK6, MAP2K4/MKK4 and MAP2K7/MKK7. Activation by ultraviolet radiation, hyperosmotic shock, anisomycin or by TNF-alpha is mediated by MAP2K3/MKK3. Inhibited by dual specificity phosphatase DUSP1. In terms of biological role, serine/threonine kinase which acts as an essential component of the MAP kinase signal transduction pathway. MAPK13 is one of the four p38 MAPKs which play an important role in the cascades of cellular responses evoked by extracellular stimuli such as pro-inflammatory cytokines or physical stress leading to direct activation of transcription factors such as ELK1 and ATF2. Accordingly, p38 MAPKs phosphorylate a broad range of proteins and it has been estimated that they may have approximately 200 to 300 substrates each. MAPK13 is one of the less studied p38 MAPK isoforms. Some of the targets are downstream kinases such as MAPKAPK2, which are activated through phosphorylation and further phosphorylate additional targets. Plays a role in the regulation of protein translation by phosphorylating and inactivating EEF2K. Involved in cytoskeletal remodeling through phosphorylation of MAPT and STMN1. Mediates UV irradiation induced up-regulation of the gene expression of CXCL14. Plays an important role in the regulation of epidermal keratinocyte differentiation, apoptosis and skin tumor development. Phosphorylates the transcriptional activator MYB in response to stress which leads to rapid MYB degradation via a proteasome-dependent pathway. MAPK13 also phosphorylates and down-regulates PRKD1 during regulation of insulin secretion in pancreatic beta cells. The polypeptide is Mitogen-activated protein kinase 13 (MAPK13) (Bos taurus (Bovine)).